A 912-amino-acid chain; its full sequence is Eukaryotic translation initiation factor 3 subunit C (912 aa).

Residues 1 to 44 (MSRFFTTGSDSESESSLSGEELVTKPVGGNYGKQPLLLSEDEED) form a disordered region. Low complexity predominate over residues 8–21 (GSDSESESSLSGEE). Phosphoserine occurs at positions 9, 11, 13, 15, 16, 18, and 39. Residue Lys-99 is modified to N6-acetyllysine. Disordered regions lie at residues 157–305 (TNYK…RVRG) and 521–541 (QLTPPEGSSKSEQDQAENEGE). Ser-166, Ser-178, Ser-181, and Ser-182 each carry phosphoserine. The segment covering 166 to 190 (SADEDAEKNEEDSEGSSDEDEDDDG) has biased composition (acidic residues). The segment covering 199-215 (KKSEAPSGDSRKFLKKE) has biased composition (basic and acidic residues). Residues 216-229 (DEDEDSEESEDSEA) show a composition bias toward acidic residues. Positions 260–277 (PTTEEDKKAAEKKREDKA) are enriched in basic and acidic residues. A compositionally biased stretch (polar residues) spans 521–530 (QLTPPEGSSK). Thr-523 is modified (phosphothreonine). Position 642 is an N6-acetyllysine (Lys-642). The PCI domain maps to 672 to 848 (FHLHINLELL…QTVVMHRTEP (177 aa)). The segment at 884–912 (FRDQKDGYRKNEGYMRRGGYRQQQSQTAY) is disordered. Positions 885-898 (RDQKDGYRKNEGYM) are enriched in basic and acidic residues. The residue at position 908 (Ser-908) is a Phosphoserine.

The protein belongs to the eIF-3 subunit C family. In terms of assembly, component of the eukaryotic translation initiation factor 3 (eIF-3) complex, which is composed of 13 subunits: EIF3A, EIF3B, EIF3C, EIF3D, EIF3E, EIF3F, EIF3G, EIF3H, EIF3I, EIF3J, EIF3K, EIF3L and EIF3M. The eIF-3 complex appears to include 3 stable modules: module A is composed of EIF3A, EIF3B, EIF3G and EIF3I; module B is composed of EIF3F, EIF3H, and EIF3M; and module C is composed of EIF3C, EIF3D, EIF3E, EIF3K and EIF3L. EIF3C of module C binds EIF3B of module A and EIF3H of module B, thereby linking the three modules. EIF3J is a labile subunit that binds to the eIF-3 complex via EIF3B. The eIF-3 complex interacts with RPS6KB1 under conditions of nutrient depletion. Mitogenic stimulation leads to binding and activation of a complex composed of MTOR and RPTOR, leading to phosphorylation and release of RPS6KB1 and binding of EIF4B to eIF-3. Identified in a HCV IRES-mediated translation complex, at least composed of EIF3C, IGF2BP1, RPS3 and HCV RNA-replicon. Interacts with ALKBH4, IFIT1 and IFIT2. Interacts with BZW2/5MP1. Post-translationally, phosphorylated. Phosphorylation is enhanced upon serum stimulation.

It is found in the cytoplasm. Its function is as follows. Component of the eukaryotic translation initiation factor 3 (eIF-3) complex, which is required for several steps in the initiation of protein synthesis. The eIF-3 complex associates with the 40S ribosome and facilitates the recruitment of eIF-1, eIF-1A, eIF-2:GTP:methionyl-tRNAi and eIF-5 to form the 43S pre-initiation complex (43S PIC). The eIF-3 complex stimulates mRNA recruitment to the 43S PIC and scanning of the mRNA for AUG recognition. The eIF-3 complex is also required for disassembly and recycling of post-termination ribosomal complexes and subsequently prevents premature joining of the 40S and 60S ribosomal subunits prior to initiation. The eIF-3 complex specifically targets and initiates translation of a subset of mRNAs involved in cell proliferation, including cell cycling, differentiation and apoptosis, and uses different modes of RNA stem-loop binding to exert either translational activation or repression. This Bos taurus (Bovine) protein is Eukaryotic translation initiation factor 3 subunit C.